The following is a 123-amino-acid chain: Small ribosomal subunit protein uS12 (123 aa).

The segment at methionine 1–histidine 26 is disordered. Aspartate 90 is subject to 3-methylthioaspartic acid.

It belongs to the universal ribosomal protein uS12 family. As to quaternary structure, part of the 30S ribosomal subunit. Contacts proteins S8 and S17. May interact with IF1 in the 30S initiation complex.

Its function is as follows. With S4 and S5 plays an important role in translational accuracy. Interacts with and stabilizes bases of the 16S rRNA that are involved in tRNA selection in the A site and with the mRNA backbone. Located at the interface of the 30S and 50S subunits, it traverses the body of the 30S subunit contacting proteins on the other side and probably holding the rRNA structure together. The combined cluster of proteins S8, S12 and S17 appears to hold together the shoulder and platform of the 30S subunit. The sequence is that of Small ribosomal subunit protein uS12 from Ehrlichia chaffeensis (strain ATCC CRL-10679 / Arkansas).